Here is a 462-residue protein sequence, read N- to C-terminus: MSSGKIVQVIGAVVDVAFNQDVVPTVYHALEVHIDSFNKKLILEVAQQLGGGIVRCIAMGNTDGLRRGLVVINLKHSIEVPVGKETLGRVMNVLGEPIDMKGPIKEKEKWSIHRSAPLYSELSTDQDLLVTGIKVIDLMCPFSKGGKIGLFGGAGVGKTVNMMELIRNIAVEHSGYSVFVGVGERTREGNDFYNEMINSDVINKVALVYGQMNEPPGNRLRVALTGLTMAEKFRDEGHDVLLFIDNIYRYTLAGTEVSALLGRIPSAVGYQSTLSEEMGILQERITSTSLGSITSVQAVYVPADDLTDPSPATTFSHLDATIVLSRQIAALGIYPSVDPLDSNSQQLNPLIVGQEHYNVARDVKSILQRYQELKDIIAILGMDELSEEDKLIVLRSRKIQRFLSQPFFVAEVFTGFSGVYVSLRDTIQGFKEIIEGKYDHIPEQAFYMVGTIEEVIKKNKTL.

An ATP-binding site is contributed by 152–159 (GGAGVGKT).

It belongs to the ATPase alpha/beta chains family. As to quaternary structure, F-type ATPases have 2 components, CF(1) - the catalytic core - and CF(0) - the membrane proton channel. CF(1) has five subunits: alpha(3), beta(3), gamma(1), delta(1), epsilon(1). CF(0) has three main subunits: a(1), b(2) and c(9-12). The alpha and beta chains form an alternating ring which encloses part of the gamma chain. CF(1) is attached to CF(0) by a central stalk formed by the gamma and epsilon chains, while a peripheral stalk is formed by the delta and b chains.

The protein localises to the cell inner membrane. It catalyses the reaction ATP + H2O + 4 H(+)(in) = ADP + phosphate + 5 H(+)(out). Its function is as follows. Produces ATP from ADP in the presence of a proton gradient across the membrane. The catalytic sites are hosted primarily by the beta subunits. The chain is ATP synthase subunit beta from Blochmanniella pennsylvanica (strain BPEN).